Reading from the N-terminus, the 417-residue chain is MLSRIATSSLGLSRSATGVIATQSRQISFDLSETQKEIQDAALKFSKDVLVPNAAKFDESGEFPWEIVRQAHSLGLMNPQIPEKYGGPGMTTLETALIVEALSYGCTGIQLGIMGPSLAIAPVYISGNEEQKKKYLGALAAEPIIASYCVTEPGAGSDVNGVKTKCEKKGDEYIINGSKAWITGGGHAKWFFVLARSDPNPKTPAGKAFTAFIVDGDTPGITRGKKEKNMGQRCSDTRVITFEDVRVPAENVLGAPGAGFKVAMEAFDMTRPGVAAGALGLSWRCLDESAKYALERKAFGTVIANHQAVQFMLADMAVNLELARLITYKSANDVDNKVRSSYNASIAKCFAADTANQAATNAVQIFGGNGFNSEYPVEKLMRDAKIYQIYEGTSQIQRIVISRMLLGHFAQNGTSRI.

The N-terminal 15 residues, 1–15 (MLSRIATSSLGLSRS), are a transit peptide targeting the mitochondrion. FAD is bound by residues 148–157 (YCVTEPGAGS) and 181–183 (WIT). S157 lines the substrate pocket. A substrate-binding site is contributed by 268-271 (DMTR). Residues 306–307 (HQ) and 364–368 (QIFGG) contribute to the FAD site. Residue E391 is the Proton acceptor of the active site. G392 lines the substrate pocket. Residue 393–395 (TSQ) coordinates FAD.

Belongs to the acyl-CoA dehydrogenase family. In terms of assembly, homotetramer. It depends on FAD as a cofactor. In terms of tissue distribution, expressed in the epidermis and intestine.

The protein resides in the mitochondrion matrix. It catalyses the reaction a medium-chain 2,3-saturated fatty acyl-CoA + oxidized [electron-transfer flavoprotein] + H(+) = a medium-chain (2E)-enoyl-CoA + reduced [electron-transfer flavoprotein]. It participates in lipid metabolism; mitochondrial fatty acid beta-oxidation. Functionally, this enzyme is specific for acyl chain lengths of 4 to 16. In Caenorhabditis elegans, this protein is Probable medium-chain specific acyl-CoA dehydrogenase 10, mitochondrial (acdh-10).